We begin with the raw amino-acid sequence, 377 residues long: Cytochrome b (377 aa).

The next 4 membrane-spanning stretches (helical) occupy residues 33-53 (FGSL…FLAM), 77-98 (WLIR…YLHT), 113-133 (WTMG…GYVL), and 178-198 (FFMI…VHLL). The heme b site is built by His83 and His97. Residues His182 and His196 each coordinate heme b. Residue His201 participates in a ubiquinone binding. 4 helical membrane-spanning segments follow: residues 226–246 (YKDL…SLLS), 288–308 (LGGV…PLSS), 320–340 (FNQI…WIGA), and 347–367 (FIIM…LNPM).

This sequence belongs to the cytochrome b family. As to quaternary structure, the main subunits of complex b-c1 are: cytochrome b, cytochrome c1 and the Rieske protein. The cofactor is heme b.

It localises to the mitochondrion inner membrane. Functionally, component of the ubiquinol-cytochrome c reductase complex (complex III or cytochrome b-c1 complex) that is part of the mitochondrial respiratory chain. The b-c1 complex mediates electron transfer from ubiquinol to cytochrome c. Contributes to the generation of a proton gradient across the mitochondrial membrane that is then used for ATP synthesis. This chain is Cytochrome b (MT-CYB), found in Tetrodontophora bielanensis (Giant springtail).